Consider the following 101-residue polypeptide: Biogenesis of lysosome-related organelles complex 1 subunit BLS1 (101 aa).

This sequence belongs to the BLOC1S1 family. As to quaternary structure, component of the biogenesis of lysosome-related organelles complex-1 (BLOC-1).

It is found in the endosome. Functionally, component of the biogenesis of lysosome-related organelles complex-1 (BLOC-1), a complex involved in endosomal cargo sorting. The sequence is that of Biogenesis of lysosome-related organelles complex 1 subunit BLS1 (BLS1) from Zygosaccharomyces rouxii (strain ATCC 2623 / CBS 732 / NBRC 1130 / NCYC 568 / NRRL Y-229).